We begin with the raw amino-acid sequence, 119 residues long: Ribonuclease P protein component (119 aa).

It belongs to the RnpA family. Consists of a catalytic RNA component (M1 or rnpB) and a protein subunit.

The catalysed reaction is Endonucleolytic cleavage of RNA, removing 5'-extranucleotides from tRNA precursor.. RNaseP catalyzes the removal of the 5'-leader sequence from pre-tRNA to produce the mature 5'-terminus. It can also cleave other RNA substrates such as 4.5S RNA. The protein component plays an auxiliary but essential role in vivo by binding to the 5'-leader sequence and broadening the substrate specificity of the ribozyme. The polypeptide is Ribonuclease P protein component (Nitrosomonas europaea (strain ATCC 19718 / CIP 103999 / KCTC 2705 / NBRC 14298)).